An 844-amino-acid chain; its full sequence is Probable inorganic carbon transporter subunit DabA 1 (844 aa).

4 residues coordinate Zn(2+): Cys-359, Asp-361, His-543, and Cys-558.

It belongs to the inorganic carbon transporter (TC 9.A.2) DabA family. In terms of assembly, forms a complex with DabB. Zn(2+) serves as cofactor.

The protein localises to the cell inner membrane. In terms of biological role, part of an energy-coupled inorganic carbon pump. The polypeptide is Probable inorganic carbon transporter subunit DabA 1 (Bradyrhizobium sp. (strain BTAi1 / ATCC BAA-1182)).